We begin with the raw amino-acid sequence, 523 residues long: MSQQVIIFDTTLRDGEQALQASLSVKEKLQIALALERMGVDVMEVGFPVSSPGDFESVQSIARTIKNSRVCALARCVEKDIDVAAESLKVAEAFRIHTFIATSPMHIATKLRSTLDEVIERAIYMVKRARNYTDDVEFSCEDAGRTPIADLARVVEAAINAGATTINIPDTVGYTMPFEYANIISGLYDRVPNIDKAIISVHTHDDLGIAVGNALAAVHAGARQVEGAMNGIGERAGNCALEEVIMAIKVRKDIMNVHTNINHHEIWRTSQTVSQICNMPIPANKAIVGTGAFAHSSGIHQDGVLKNRENYEIMTPESIGLNQVQLNLTSRSGRAAVKHRMEEMGYQESDYNLDHLYDAFLKLADKKGQVFDYDLEALAFINKQQEEPEHFRLDYFSVQSGSSDIATASIKLVCGDEIKTEAANGNGPVDAIYQAINRVTNYNIDLVKYGLSAKGHGKDALGQVDIVVDYNGRRFHGVGLATDIVESSAKAMVHVLNNIWRAAEVEKELQRKAQNKENNKETV.

One can recognise a Pyruvate carboxyltransferase domain in the interval 5-267 (VIIFDTTLRD…HTNINHHEIW (263 aa)). Positions 14, 202, 204, and 238 each coordinate Mn(2+). The interval 392-523 (RLDYFSVQSG…QNKENNKETV (132 aa)) is regulatory domain.

This sequence belongs to the alpha-IPM synthase/homocitrate synthase family. LeuA type 1 subfamily. As to quaternary structure, homodimer. It depends on Mn(2+) as a cofactor.

Its subcellular location is the cytoplasm. It carries out the reaction 3-methyl-2-oxobutanoate + acetyl-CoA + H2O = (2S)-2-isopropylmalate + CoA + H(+). It participates in amino-acid biosynthesis; L-leucine biosynthesis; L-leucine from 3-methyl-2-oxobutanoate: step 1/4. In terms of biological role, catalyzes the condensation of the acetyl group of acetyl-CoA with 3-methyl-2-oxobutanoate (2-ketoisovalerate) to form 3-carboxy-3-hydroxy-4-methylpentanoate (2-isopropylmalate). The protein is 2-isopropylmalate synthase of Klebsiella pneumoniae (strain 342).